The primary structure comprises 609 residues: MCGIVGAIAQRDVAEILLEGLRRLEYRGYDSAGLAVVDAEGHMTRLRRLGKVQMLAQAAEEHPLHGGTGIAHTRWATHGEPSEANAHPHVSEHIVVVHNGIIENHEPLREALKARGYTFVSETDTEVIAHLVNWELKQGGTLREAVLRAIPQLRGAYGTVIMDTRHPDTLLAARSGSPLVIGLGMGENFIASDQLALLPVTRRFIFLEEGDIAEITRRSVNIFDNTGAEVKRQDIESNLQYDAGDKGIYRHYMQKEIYEQPNAIKNTLTGRISHGQVDLSELGPNADELLSKVEHIQILACGTSYNSGMVSRYWFESLAGIPCDVEIASEFRYRKSAVRRNSLMITLSQSGETADTLAGLRLSKELGYLGSLAICNVPGSSLVRESDLALMTNAGTEIGVASTKAFTTQLTVLLMLVAKLSRLKGLDASIEHDIVHGLQALPSRIEQMLSQDKRIELLAEDFSDKHHALFLGRGDQYPIALEGALKLKEISYIHAEAYAAGELKHGPLALIDADMPVIVVAPNNELLEKLKSNIEEVRARGGQLYVFADQDAGFVSNDNMHIIEMPHVEEVIAPIFYTVPLQLLAYHVALIKGTDVDQPRNLAKSVTVE.

The active-site Nucleophile; for GATase activity is Cys-2. The Glutamine amidotransferase type-2 domain maps to 2-218 (CGIVGAIAQR…EGDIAEITRR (217 aa)). SIS domains are found at residues 286-426 (ADEL…LKGL) and 458-599 (LAED…VDQP). The active-site For Fru-6P isomerization activity is the Lys-604.

As to quaternary structure, homodimer.

It localises to the cytoplasm. The enzyme catalyses D-fructose 6-phosphate + L-glutamine = D-glucosamine 6-phosphate + L-glutamate. Catalyzes the first step in hexosamine metabolism, converting fructose-6P into glucosamine-6P using glutamine as a nitrogen source. The polypeptide is Glutamine--fructose-6-phosphate aminotransferase [isomerizing] (Salmonella typhimurium (strain LT2 / SGSC1412 / ATCC 700720)).